Here is a 177-residue protein sequence, read N- to C-terminus: Endoribonuclease YbeY (177 aa).

Zn(2+) contacts are provided by His-142, His-146, and His-152.

The protein belongs to the endoribonuclease YbeY family. Zn(2+) is required as a cofactor.

Its subcellular location is the cytoplasm. Its function is as follows. Single strand-specific metallo-endoribonuclease involved in late-stage 70S ribosome quality control and in maturation of the 3' terminus of the 16S rRNA. This Synechococcus sp. (strain CC9311) protein is Endoribonuclease YbeY.